Consider the following 590-residue polypeptide: Cytidine monophosphate-N-acetylneuraminic acid hydroxylase (590 aa).

The 99-residue stretch at 14 to 112 folds into the Rieske domain; sequence LSPVEVANLK…VEMDENNGLL (99 aa). [2Fe-2S] cluster is bound by residues cysteine 54, histidine 56, cysteine 75, and histidine 78.

This sequence belongs to the CMP-Neu5Ac hydroxylase family. The cofactor is [2Fe-2S] cluster.

The protein resides in the cytoplasm. It catalyses the reaction CMP-N-acetyl-beta-neuraminate + 2 Fe(II)-[cytochrome b5] + O2 + 2 H(+) = CMP-N-glycoloyl-beta-neuraminate + 2 Fe(III)-[cytochrome b5] + H2O. It functions in the pathway amino-sugar metabolism; N-acetylneuraminate metabolism. Sialic acids are components of carbohydrate chains of glycoconjugates and are involved in cell-cell recognition and cell-pathogen interactions. Catalyzes the conversion of CMP-N-acetylneuraminic acid (CMP-Neu5Ac) into its hydroxylated derivative CMP-N-glycolylneuraminic acid (CMP-Neu5Gc), a sialic acid abundantly expressed at the surface of many cells. The polypeptide is Cytidine monophosphate-N-acetylneuraminic acid hydroxylase (CMAH) (Macaca mulatta (Rhesus macaque)).